Reading from the N-terminus, the 274-residue chain is tRNA-cytidine(32) 2-sulfurtransferase (274 aa).

Positions 40 to 45 match the PP-loop motif motif; the sequence is SGGKDS. 3 residues coordinate [4Fe-4S] cluster: Cys-115, Cys-118, and Cys-206.

Belongs to the TtcA family. In terms of assembly, homodimer. It depends on Mg(2+) as a cofactor. The cofactor is [4Fe-4S] cluster.

Its subcellular location is the cytoplasm. The catalysed reaction is cytidine(32) in tRNA + S-sulfanyl-L-cysteinyl-[cysteine desulfurase] + AH2 + ATP = 2-thiocytidine(32) in tRNA + L-cysteinyl-[cysteine desulfurase] + A + AMP + diphosphate + H(+). The protein operates within tRNA modification. In terms of biological role, catalyzes the ATP-dependent 2-thiolation of cytidine in position 32 of tRNA, to form 2-thiocytidine (s(2)C32). The sulfur atoms are provided by the cysteine/cysteine desulfurase (IscS) system. This is tRNA-cytidine(32) 2-sulfurtransferase from Pseudomonas fluorescens (strain ATCC BAA-477 / NRRL B-23932 / Pf-5).